The chain runs to 486 residues: UDP-N-acetylmuramate--L-alanine ligase (486 aa).

126–132 contacts ATP; the sequence is GTHGKTT.

The protein belongs to the MurCDEF family.

The protein resides in the cytoplasm. The enzyme catalyses UDP-N-acetyl-alpha-D-muramate + L-alanine + ATP = UDP-N-acetyl-alpha-D-muramoyl-L-alanine + ADP + phosphate + H(+). Its pathway is cell wall biogenesis; peptidoglycan biosynthesis. Cell wall formation. This Pectobacterium carotovorum subsp. carotovorum (strain PC1) protein is UDP-N-acetylmuramate--L-alanine ligase.